Reading from the N-terminus, the 259-residue chain is Imidazole glycerol phosphate synthase subunit HisF (259 aa).

Catalysis depends on residues D11 and D130.

It belongs to the HisA/HisF family. In terms of assembly, heterodimer of HisH and HisF.

Its subcellular location is the cytoplasm. It catalyses the reaction 5-[(5-phospho-1-deoxy-D-ribulos-1-ylimino)methylamino]-1-(5-phospho-beta-D-ribosyl)imidazole-4-carboxamide + L-glutamine = D-erythro-1-(imidazol-4-yl)glycerol 3-phosphate + 5-amino-1-(5-phospho-beta-D-ribosyl)imidazole-4-carboxamide + L-glutamate + H(+). The protein operates within amino-acid biosynthesis; L-histidine biosynthesis; L-histidine from 5-phospho-alpha-D-ribose 1-diphosphate: step 5/9. Its function is as follows. IGPS catalyzes the conversion of PRFAR and glutamine to IGP, AICAR and glutamate. The HisF subunit catalyzes the cyclization activity that produces IGP and AICAR from PRFAR using the ammonia provided by the HisH subunit. This chain is Imidazole glycerol phosphate synthase subunit HisF, found in Syntrophobacter fumaroxidans (strain DSM 10017 / MPOB).